Reading from the N-terminus, the 329-residue chain is Acetyl-coenzyme A carboxylase carboxyl transferase subunit alpha (329 aa).

The CoA carboxyltransferase C-terminal domain maps to 40–294 (QLETLAARRR…REALERNLSE (255 aa)).

This sequence belongs to the AccA family. In terms of assembly, acetyl-CoA carboxylase is a heterohexamer composed of biotin carboxyl carrier protein (AccB), biotin carboxylase (AccC) and two subunits each of ACCase subunit alpha (AccA) and ACCase subunit beta (AccD).

It localises to the cytoplasm. The catalysed reaction is N(6)-carboxybiotinyl-L-lysyl-[protein] + acetyl-CoA = N(6)-biotinyl-L-lysyl-[protein] + malonyl-CoA. The protein operates within lipid metabolism; malonyl-CoA biosynthesis; malonyl-CoA from acetyl-CoA: step 1/1. Component of the acetyl coenzyme A carboxylase (ACC) complex. First, biotin carboxylase catalyzes the carboxylation of biotin on its carrier protein (BCCP) and then the CO(2) group is transferred by the carboxyltransferase to acetyl-CoA to form malonyl-CoA. This is Acetyl-coenzyme A carboxylase carboxyl transferase subunit alpha from Synechococcus sp. (strain CC9311).